The primary structure comprises 214 residues: Pyrrolidone-carboxylate peptidase (214 aa).

Catalysis depends on residues Glu-80, Cys-143, and His-166.

Belongs to the peptidase C15 family. Homotetramer.

The protein localises to the cytoplasm. It catalyses the reaction Release of an N-terminal pyroglutamyl group from a polypeptide, the second amino acid generally not being Pro.. Its function is as follows. Removes 5-oxoproline from various penultimate amino acid residues except L-proline. This chain is Pyrrolidone-carboxylate peptidase, found in Klebsiella pneumoniae (strain 342).